Here is a 319-residue protein sequence, read N- to C-terminus: tRNA uridine(34) hydroxylase (319 aa).

The 95-residue stretch at 127 to 221 (KQEDTVIIDA…YGKDPEVQGE (95 aa)) folds into the Rhodanese domain. The Cysteine persulfide intermediate role is filled by Cys-181.

This sequence belongs to the TrhO family.

It carries out the reaction uridine(34) in tRNA + AH2 + O2 = 5-hydroxyuridine(34) in tRNA + A + H2O. Its function is as follows. Catalyzes oxygen-dependent 5-hydroxyuridine (ho5U) modification at position 34 in tRNAs. This is tRNA uridine(34) hydroxylase from Bacillus cereus (strain ATCC 10987 / NRS 248).